A 166-amino-acid chain; its full sequence is UPF0251 protein UNCMA_27150 (166 aa).

It belongs to the UPF0251 family.

The polypeptide is UPF0251 protein UNCMA_27150 (Methanocella arvoryzae (strain DSM 22066 / NBRC 105507 / MRE50)).